Here is a 918-residue protein sequence, read N- to C-terminus: UPF0182 protein CPR_0011 (918 aa).

7 helical membrane passes run 8–28 (TVLI…NFII), 46–66 (LIAI…VIAI), 91–111 (FLLS…TTQW), 151–171 (AISL…ALGF), 200–220 (LAVL…LKSY), 243–263 (IFYK…FISI), and 271–291 (IIIS…VAIF).

This sequence belongs to the UPF0182 family.

It localises to the cell membrane. The sequence is that of UPF0182 protein CPR_0011 from Clostridium perfringens (strain SM101 / Type A).